A 150-amino-acid chain; its full sequence is SsrA-binding protein (150 aa).

It belongs to the SmpB family.

The protein resides in the cytoplasm. Functionally, required for rescue of stalled ribosomes mediated by trans-translation. Binds to transfer-messenger RNA (tmRNA), required for stable association of tmRNA with ribosomes. tmRNA and SmpB together mimic tRNA shape, replacing the anticodon stem-loop with SmpB. tmRNA is encoded by the ssrA gene; the 2 termini fold to resemble tRNA(Ala) and it encodes a 'tag peptide', a short internal open reading frame. During trans-translation Ala-aminoacylated tmRNA acts like a tRNA, entering the A-site of stalled ribosomes, displacing the stalled mRNA. The ribosome then switches to translate the ORF on the tmRNA; the nascent peptide is terminated with the 'tag peptide' encoded by the tmRNA and targeted for degradation. The ribosome is freed to recommence translation, which seems to be the essential function of trans-translation. This Campylobacter jejuni (strain RM1221) protein is SsrA-binding protein.